Reading from the N-terminus, the 376-residue chain is Erythronate-4-phosphate dehydrogenase (376 aa).

The substrate site is built by Ser-45 and Thr-67. Asp-147 contributes to the NAD(+) binding site. The active site involves Arg-209. An NAD(+)-binding site is contributed by Asp-233. The active site involves Glu-238. The active-site Proton donor is the His-255. NAD(+) is bound at residue Gly-258. Tyr-259 contributes to the substrate binding site.

This sequence belongs to the D-isomer specific 2-hydroxyacid dehydrogenase family. PdxB subfamily. Homodimer.

It is found in the cytoplasm. It catalyses the reaction 4-phospho-D-erythronate + NAD(+) = (R)-3-hydroxy-2-oxo-4-phosphooxybutanoate + NADH + H(+). It participates in cofactor biosynthesis; pyridoxine 5'-phosphate biosynthesis; pyridoxine 5'-phosphate from D-erythrose 4-phosphate: step 2/5. Its function is as follows. Catalyzes the oxidation of erythronate-4-phosphate to 3-hydroxy-2-oxo-4-phosphonooxybutanoate. This Shewanella sp. (strain MR-4) protein is Erythronate-4-phosphate dehydrogenase.